The chain runs to 150 residues: Small ribosomal subunit protein bS6 (150 aa).

Positions 99 to 150 (GPSAMLQKRDRDDRGERGERGFGGGGFGGGRDREDRPRRGRDREEAATEETF) are disordered. Composition is skewed to basic and acidic residues over residues 105–118 (QKRD…RGER) and 128–144 (GRDR…REEA).

This sequence belongs to the bacterial ribosomal protein bS6 family.

Its function is as follows. Binds together with bS18 to 16S ribosomal RNA. This chain is Small ribosomal subunit protein bS6, found in Azorhizobium caulinodans (strain ATCC 43989 / DSM 5975 / JCM 20966 / LMG 6465 / NBRC 14845 / NCIMB 13405 / ORS 571).